Here is a 365-residue protein sequence, read N- to C-terminus: Transcription factor TCP2 (365 aa).

In terms of domain architecture, TCP spans 42–100 (GKDRHSKVLTSKGPRDRRVRLSVSTALQFYDLQDRLGYDQPSKAVEWLIKAAEDSISEL). A compositionally biased stretch (low complexity) spans 130-150 (KSACSSNSDTSKNSSGLSLSR). Disordered regions lie at residues 130-202 (KSAC…SAPS) and 220-245 (QTHFPISTNSHPFSSISDHHHHHPHH). A R domain is found at 151–172 (SELRDKARERARERTAKETKER). Residues 151-176 (SELRDKARERARERTAKETKERDHNH) show a composition bias toward basic and acidic residues. Residues 177-202 (TSFTDLLNSGSDPVNSNRQWMASAPS) are compositionally biased toward polar residues.

As to quaternary structure, interacts with SPL. Interacts with CRY1. In terms of tissue distribution, expressed in cotyledons, particularly in the vascular region, in leaves, roots, buds, flowers and immature siliques.

The protein localises to the nucleus. In terms of biological role, plays a pivotal role in the control of morphogenesis of shoot organs by negatively regulating the expression of boundary-specific genes such as CUC genes, probably through the induction of miRNA (e.g. miR164). Participates in ovule development. Promotes light-regulated transcription of CHS, CAB, HYH and HY5. Positively regulates photomorphogenesis (e.g. hypocotyl elongation inhibition and cotyledon opening in response to blue light). The sequence is that of Transcription factor TCP2 from Arabidopsis thaliana (Mouse-ear cress).